A 192-amino-acid polypeptide reads, in one-letter code: UPF0312 protein YPK_1931 (192 aa).

A signal peptide spans 1–23 (MINKTLLGLSLGALMFTAGSAVA).

Belongs to the UPF0312 family. Type 1 subfamily.

The protein localises to the periplasm. The protein is UPF0312 protein YPK_1931 of Yersinia pseudotuberculosis serotype O:3 (strain YPIII).